Consider the following 236-residue polypeptide: Large ribosomal subunit protein uL1 (236 aa).

Belongs to the universal ribosomal protein uL1 family. Part of the 50S ribosomal subunit.

Functionally, binds directly to 23S rRNA. The L1 stalk is quite mobile in the ribosome, and is involved in E site tRNA release. In terms of biological role, protein L1 is also a translational repressor protein, it controls the translation of the L11 operon by binding to its mRNA. This chain is Large ribosomal subunit protein uL1, found in Corynebacterium efficiens (strain DSM 44549 / YS-314 / AJ 12310 / JCM 11189 / NBRC 100395).